The sequence spans 378 residues: Spermidine/putrescine import ATP-binding protein PotA (378 aa).

Positions 18 to 248 (VQLAGIRKCF…PKNLFVAGFI (231 aa)) constitute an ABC transporter domain. 50 to 57 (GPSGCGKT) provides a ligand contact to ATP.

Belongs to the ABC transporter superfamily. Spermidine/putrescine importer (TC 3.A.1.11.1) family. The complex is composed of two ATP-binding proteins (PotA), two transmembrane proteins (PotB and PotC) and a solute-binding protein (PotD).

It is found in the cell inner membrane. It carries out the reaction ATP + H2O + polyamine-[polyamine-binding protein]Side 1 = ADP + phosphate + polyamineSide 2 + [polyamine-binding protein]Side 1.. In terms of biological role, part of the ABC transporter complex PotABCD involved in spermidine/putrescine import. Responsible for energy coupling to the transport system. The sequence is that of Spermidine/putrescine import ATP-binding protein PotA from Shigella dysenteriae serotype 1 (strain Sd197).